The chain runs to 752 residues: Protein ORF24 (752 aa).

The protein belongs to the herpesviridae UL87 family. In terms of assembly, interacts with ORF34.

Its function is as follows. Plays a role in the expression of late viral mRNAs together with ORF34. In Homo sapiens (Human), this protein is Protein ORF24 (ORF24).